The chain runs to 210 residues: Tetraspanin-31 (210 aa).

Over 1-12 (MVCGGFACSKNA) the chain is Cytoplasmic. Residues 13-33 (LCALNVVYMLVGLLLIGVAAW) traverse the membrane as a helical segment. The Extracellular segment spans residues 34 to 44 (AKGLGLVSSIH). The chain crosses the membrane as a helical span at residues 45 to 65 (IIGGVIAVGVFLLLIAVAGLV). At 66–72 (GAVNHHQ) the chain is on the cytoplasmic side. Residues 73-93 (VLLFFYMIILGLVFIFQFGIS) form a helical membrane-spanning segment. Over 94–173 (CSCLAINLSK…FLKHSDEALK (80 aa)) the chain is Extracellular. N-linked (GlcNAc...) asparagine glycosylation is found at asparagine 100, asparagine 109, asparagine 117, and asparagine 134. A helical transmembrane segment spans residues 174–194 (ILGGVGLFFSFTEILGVWLAM). Residues 195–210 (RFRNQKDPRANPSAFL) are Cytoplasmic-facing.

The protein belongs to the tetraspanin (TM4SF) family.

It localises to the membrane. The protein is Tetraspanin-31 (TSPAN31) of Bos taurus (Bovine).